Here is a 31-residue protein sequence, read N- to C-terminus: uncharacterized protein (31 aa).

The tract at residues 1–31 is disordered; sequence MKKLERMSEVSQMCSEAKKNRKRMSVVSSVA.

This is an uncharacterized protein from Sulfolobus islandicus filamentous virus (isolate Iceland/Hveragerdi) (SIFV).